We begin with the raw amino-acid sequence, 239 residues long: tRNA (guanine-N(7)-)-methyltransferase (239 aa).

The S-adenosyl-L-methionine site is built by Glu68, Glu93, Asp120, and Asp143. Asp143 is an active-site residue. Residues Lys147, Asp180, and 217–220 (TKFE) each bind substrate.

It belongs to the class I-like SAM-binding methyltransferase superfamily. TrmB family.

It carries out the reaction guanosine(46) in tRNA + S-adenosyl-L-methionine = N(7)-methylguanosine(46) in tRNA + S-adenosyl-L-homocysteine. It participates in tRNA modification; N(7)-methylguanine-tRNA biosynthesis. In terms of biological role, catalyzes the formation of N(7)-methylguanine at position 46 (m7G46) in tRNA. This chain is tRNA (guanine-N(7)-)-methyltransferase, found in Vibrio vulnificus (strain CMCP6).